A 461-amino-acid chain; its full sequence is Cysteine--tRNA ligase (461 aa).

Position 28 (C28) interacts with Zn(2+). A 'HIGH' region motif is present at residues 30 to 40 (ITVYDLCHIGH). Zn(2+)-binding residues include C209, H234, and E238. A 'KMSKS' region motif is present at residues 266–270 (KMSKS). Residue K269 participates in ATP binding.

Belongs to the class-I aminoacyl-tRNA synthetase family. As to quaternary structure, monomer. Zn(2+) serves as cofactor.

Its subcellular location is the cytoplasm. The enzyme catalyses tRNA(Cys) + L-cysteine + ATP = L-cysteinyl-tRNA(Cys) + AMP + diphosphate. In Pectobacterium carotovorum subsp. carotovorum (strain PC1), this protein is Cysteine--tRNA ligase.